A 456-amino-acid chain; its full sequence is Bifunctional protein GlmU (456 aa).

The interval 1-229 is pyrophosphorylase; the sequence is MLNNAMSVVI…LSEVEGVNNR (229 aa). Residues 11 to 14, Lys25, Gln76, 81 to 82, 103 to 105, Gly140, Glu154, Asn169, and Asn227 each bind UDP-N-acetyl-alpha-D-glucosamine; these read LAAG, GT, and YGD. Asp105 contributes to the Mg(2+) binding site. Residue Asn227 participates in Mg(2+) binding. The segment at 230–250 is linker; it reads LQLSRLERVYQSEQAEKLLLA. The N-acetyltransferase stretch occupies residues 251-456; that stretch reads GVMLRDPARF…EGWRRPVKKK (206 aa). UDP-N-acetyl-alpha-D-glucosamine-binding residues include Arg333 and Lys351. Catalysis depends on His363, which acts as the Proton acceptor. Positions 366 and 377 each coordinate UDP-N-acetyl-alpha-D-glucosamine. Acetyl-CoA is bound by residues Ala380, 386-387, Ser405, Ala423, and Arg440; that span reads NY.

It in the N-terminal section; belongs to the N-acetylglucosamine-1-phosphate uridyltransferase family. The protein in the C-terminal section; belongs to the transferase hexapeptide repeat family. Homotrimer. Mg(2+) serves as cofactor.

The protein localises to the cytoplasm. It carries out the reaction alpha-D-glucosamine 1-phosphate + acetyl-CoA = N-acetyl-alpha-D-glucosamine 1-phosphate + CoA + H(+). The catalysed reaction is N-acetyl-alpha-D-glucosamine 1-phosphate + UTP + H(+) = UDP-N-acetyl-alpha-D-glucosamine + diphosphate. Its pathway is nucleotide-sugar biosynthesis; UDP-N-acetyl-alpha-D-glucosamine biosynthesis; N-acetyl-alpha-D-glucosamine 1-phosphate from alpha-D-glucosamine 6-phosphate (route II): step 2/2. It functions in the pathway nucleotide-sugar biosynthesis; UDP-N-acetyl-alpha-D-glucosamine biosynthesis; UDP-N-acetyl-alpha-D-glucosamine from N-acetyl-alpha-D-glucosamine 1-phosphate: step 1/1. It participates in bacterial outer membrane biogenesis; LPS lipid A biosynthesis. Functionally, catalyzes the last two sequential reactions in the de novo biosynthetic pathway for UDP-N-acetylglucosamine (UDP-GlcNAc). The C-terminal domain catalyzes the transfer of acetyl group from acetyl coenzyme A to glucosamine-1-phosphate (GlcN-1-P) to produce N-acetylglucosamine-1-phosphate (GlcNAc-1-P), which is converted into UDP-GlcNAc by the transfer of uridine 5-monophosphate (from uridine 5-triphosphate), a reaction catalyzed by the N-terminal domain. The protein is Bifunctional protein GlmU of Escherichia coli O6:K15:H31 (strain 536 / UPEC).